The primary structure comprises 306 residues: UDP-3-O-acyl-N-acetylglucosamine deacetylase (306 aa).

H79, H238, and D242 together coordinate Zn(2+). The active-site Proton donor is the H265.

Belongs to the LpxC family. The cofactor is Zn(2+).

The enzyme catalyses a UDP-3-O-[(3R)-3-hydroxyacyl]-N-acetyl-alpha-D-glucosamine + H2O = a UDP-3-O-[(3R)-3-hydroxyacyl]-alpha-D-glucosamine + acetate. The protein operates within glycolipid biosynthesis; lipid IV(A) biosynthesis; lipid IV(A) from (3R)-3-hydroxytetradecanoyl-[acyl-carrier-protein] and UDP-N-acetyl-alpha-D-glucosamine: step 2/6. Its function is as follows. Catalyzes the hydrolysis of UDP-3-O-myristoyl-N-acetylglucosamine to form UDP-3-O-myristoylglucosamine and acetate, the committed step in lipid A biosynthesis. In Idiomarina loihiensis (strain ATCC BAA-735 / DSM 15497 / L2-TR), this protein is UDP-3-O-acyl-N-acetylglucosamine deacetylase.